The sequence spans 420 residues: Pyrophosphate--fructose 6-phosphate 1-phosphotransferase (420 aa).

Gly-13 lines the diphosphate pocket. Substrate-binding positions include 142 to 144 (TVD), 190 to 192 (MGR), Glu-247, and 297 to 300 (YLQR). Asp-144 serves as the catalytic Proton acceptor.

The protein belongs to the phosphofructokinase type A (PFKA) family. PPi-dependent PFK group II subfamily. Clade 'B2' sub-subfamily. As to quaternary structure, homodimer. Mg(2+) serves as cofactor. Requires Co(2+) as cofactor. The cofactor is Mn(2+).

Its subcellular location is the cytoplasm. It catalyses the reaction beta-D-fructose 6-phosphate + diphosphate = beta-D-fructose 1,6-bisphosphate + phosphate + H(+). It participates in carbohydrate degradation; glycolysis; D-glyceraldehyde 3-phosphate and glycerone phosphate from D-glucose: step 3/4. With respect to regulation, non-allosteric. Functionally, catalyzes the phosphorylation of D-fructose 6-phosphate, the first committing step of glycolysis. Uses inorganic phosphate (PPi) as phosphoryl donor instead of ATP like common ATP-dependent phosphofructokinases (ATP-PFKs), which renders the reaction reversible, and can thus function both in glycolysis and gluconeogenesis. Consistently, PPi-PFK can replace the enzymes of both the forward (ATP-PFK) and reverse (fructose-bisphosphatase (FBPase)) reactions. In Methylococcus capsulatus (strain ATCC 33009 / NCIMB 11132 / Bath), this protein is Pyrophosphate--fructose 6-phosphate 1-phosphotransferase.